The primary structure comprises 500 residues: L-arabinose isomerase (500 aa).

4 residues coordinate Mn(2+): Glu306, Glu333, His350, and His450.

The protein belongs to the arabinose isomerase family. In terms of assembly, homohexamer. Mn(2+) serves as cofactor.

It carries out the reaction beta-L-arabinopyranose = L-ribulose. The protein operates within carbohydrate degradation; L-arabinose degradation via L-ribulose; D-xylulose 5-phosphate from L-arabinose (bacterial route): step 1/3. Functionally, catalyzes the conversion of L-arabinose to L-ribulose. This Escherichia coli O7:K1 (strain IAI39 / ExPEC) protein is L-arabinose isomerase.